We begin with the raw amino-acid sequence, 258 residues long: Synapse differentiation-inducing gene protein 1 (258 aa).

Residues 1–181 (MDGIIEQKSM…NFLMMPPRDH (181 aa)) are Cytoplasmic-facing. Residue Ser-137 is modified to Phosphoserine. A helical membrane pass occupies residues 182 to 202 (LGLSVFSMLCCFWPLGIAAFY). Residues 203 to 228 (LSHETNKAVAKGDLHQASTSSRRALF) are Extracellular-facing. The segment at residues 229 to 249 (LAVLSITIGTGVYVGVAVALI) is an intramembrane region (helical). At 250–258 (AYLSKNNHL) the chain is on the extracellular side.

Belongs to the CD225/Dispanin family. Homodimer. Interacts with GRIA1 and GRIA2.

It localises to the cell membrane. The protein localises to the early endosome membrane. It is found in the postsynaptic density membrane. Its subcellular location is the synapse. The protein resides in the cell projection. It localises to the dendrite. The protein localises to the dendritic spine. In terms of biological role, may regulate AMPA receptor content at nascent synapses, and have a role in postsynaptic development and maturation. The polypeptide is Synapse differentiation-inducing gene protein 1 (SYNDIG1) (Homo sapiens (Human)).